A 313-amino-acid polypeptide reads, in one-letter code: Olfactory receptor 1J2 (313 aa).

Topologically, residues 1–25 (MSPENQSSVSEFLLLGLPIRPEQQA) are extracellular. N-linked (GlcNAc...) asparagine glycosylation occurs at asparagine 5. Residues 26-49 (VFFTLFLGMYLTTVLGNLLIMLLI) traverse the membrane as a helical segment. Topologically, residues 50-57 (QLDSHLHT) are cytoplasmic. Residues 58 to 79 (PMYFFLSHLALTDISFSSVTVP) traverse the membrane as a helical segment. Residues 80–100 (KMLMDMRTKYKSILYEECISQ) are Extracellular-facing. Cysteines 97 and 189 form a disulfide. Residues 101 to 120 (MYFFIFFTDLDSFLITSMAY) form a helical membrane-spanning segment. Residues 121-139 (DRYVAICHPLHYTVIMREE) are Cytoplasmic-facing. A helical transmembrane segment spans residues 140–158 (LCVFLVAVSWILSCASSLS). Over 159-196 (HTLLLTRLSFCAANTIPHVFCDLAALLKLSCSDIFLNE) the chain is Extracellular. The chain crosses the membrane as a helical span at residues 197–219 (LVMFTVGVVVITLPFMCILVSYG). Residues 220-236 (YIGATILRVPSTKGIHK) are Cytoplasmic-facing. A helical transmembrane segment spans residues 237 to 259 (ALSTCGSHLSVVSLYYGSIFGQY). The Extracellular segment spans residues 260-272 (LFPTVSSSIDKDV). Residues 273–292 (IVALMYTVVTPMLNPFIYSL) traverse the membrane as a helical segment. Topologically, residues 293–313 (RNRDMKEALGKLFSRATFFSW) are cytoplasmic.

Belongs to the G-protein coupled receptor 1 family.

Its subcellular location is the cell membrane. Functionally, odorant receptor. The chain is Olfactory receptor 1J2 (OR1J2) from Homo sapiens (Human).